The chain runs to 391 residues: Phosphoglycerate kinase (391 aa).

Residues 21–23, Arg36, 59–62, Arg113, and Arg146 contribute to the substrate site; these read DLN and HLGR. ATP contacts are provided by residues Lys197, Glu319, and 345-348; that span reads GGDT.

It belongs to the phosphoglycerate kinase family. In terms of assembly, monomer.

The protein localises to the cytoplasm. The catalysed reaction is (2R)-3-phosphoglycerate + ATP = (2R)-3-phospho-glyceroyl phosphate + ADP. It functions in the pathway carbohydrate degradation; glycolysis; pyruvate from D-glyceraldehyde 3-phosphate: step 2/5. This Stenotrophomonas maltophilia (strain R551-3) protein is Phosphoglycerate kinase.